A 298-amino-acid polypeptide reads, in one-letter code: uncharacterized protein (298 aa).

A run of 8 helical transmembrane segments spans residues 5 to 25 (SLAT…FLLW), 52 to 72 (VISG…FLAL), 105 to 125 (LFLL…QVLV), 138 to 158 (IFWG…LLML), 163 to 183 (IQGG…NDIA), 208 to 228 (GLMG…PLLT), 236 to 256 (LLAG…MSAI), and 273 to 293 (GGLL…FYFI).

Belongs to the CDS family.

It is found in the cell membrane. This is an uncharacterized protein from Escherichia coli (strain K12).